Reading from the N-terminus, the 194-residue chain is Small ribosomal subunit protein uS4c (194 aa).

The S4 RNA-binding domain occupies 82 to 143; it reads MRLDNILFRL…KQRSKALIQN (62 aa).

It belongs to the universal ribosomal protein uS4 family. In terms of assembly, part of the 30S ribosomal subunit. Contacts protein S5. The interaction surface between S4 and S5 is involved in control of translational fidelity.

The protein localises to the plastid. It is found in the chloroplast. Functionally, one of the primary rRNA binding proteins, it binds directly to 16S rRNA where it nucleates assembly of the body of the 30S subunit. Its function is as follows. With S5 and S12 plays an important role in translational accuracy. This is Small ribosomal subunit protein uS4c (rps4) from Sisyrinchium striatum (Satin flower).